The sequence spans 196 residues: UPF0314 protein Oant_0840 (196 aa).

The next 4 helical transmembrane spans lie at 15–35 (WGLGALIVLAILAVQASWLYF), 65–85 (WYTLSHIIHGFLFYWLFTVIA), 127–147 (FGDSIVNSVADTVAALIGFLI), and 151–171 (LPTKITVAIALFFEVLALIVI).

This sequence belongs to the UPF0314 family.

Its subcellular location is the cell membrane. This Brucella anthropi (strain ATCC 49188 / DSM 6882 / CCUG 24695 / JCM 21032 / LMG 3331 / NBRC 15819 / NCTC 12168 / Alc 37) (Ochrobactrum anthropi) protein is UPF0314 protein Oant_0840.